Reading from the N-terminus, the 184-residue chain is dITP/XTP pyrophosphatase (184 aa).

5 to 10 is a substrate binding site; it reads SSNRHK. Residues E33 and D62 each coordinate Mg(2+). The Proton acceptor role is filled by D62. Substrate contacts are provided by residues S63, 136–139, K158, and 163–164; these read WGFD and HR.

Belongs to the HAM1 NTPase family. As to quaternary structure, homodimer. Mg(2+) is required as a cofactor.

The enzyme catalyses XTP + H2O = XMP + diphosphate + H(+). It catalyses the reaction dITP + H2O = dIMP + diphosphate + H(+). It carries out the reaction ITP + H2O = IMP + diphosphate + H(+). Pyrophosphatase that catalyzes the hydrolysis of nucleoside triphosphates to their monophosphate derivatives, with a high preference for the non-canonical purine nucleotides XTP (xanthosine triphosphate), dITP (deoxyinosine triphosphate) and ITP. Seems to function as a house-cleaning enzyme that removes non-canonical purine nucleotides from the nucleotide pool, thus preventing their incorporation into DNA/RNA and avoiding chromosomal lesions. The chain is dITP/XTP pyrophosphatase from Korarchaeum cryptofilum (strain OPF8).